A 122-amino-acid chain; its full sequence is Small ribosomal subunit protein uS13 (122 aa).

The tract at residues 92–122 (HRMGLPVRGQRTKTNARTRKGPSKPVSGKKK) is disordered. Residues 101 to 122 (QRTKTNARTRKGPSKPVSGKKK) show a composition bias toward basic residues.

It belongs to the universal ribosomal protein uS13 family. Part of the 30S ribosomal subunit. Forms a loose heterodimer with protein S19. Forms two bridges to the 50S subunit in the 70S ribosome.

Functionally, located at the top of the head of the 30S subunit, it contacts several helices of the 16S rRNA. In the 70S ribosome it contacts the 23S rRNA (bridge B1a) and protein L5 of the 50S subunit (bridge B1b), connecting the 2 subunits; these bridges are implicated in subunit movement. Contacts the tRNAs in the A and P-sites. The sequence is that of Small ribosomal subunit protein uS13 from Ruminiclostridium cellulolyticum (strain ATCC 35319 / DSM 5812 / JCM 6584 / H10) (Clostridium cellulolyticum).